Reading from the N-terminus, the 1148-residue chain is Zinc finger CCCH domain-containing protein 18 (1148 aa).

Positions 1 to 13 are enriched in low complexity; it reads MDTPESPTQSPQS. Disordered stretches follow at residues 1 to 315, 380 to 417, and 521 to 1127; these read MDTP…PMDR, DPFSPNGAPPGGAAGGGPHPLMPANPWGAPAVEELPPP, and YTET…REEL. 2 stretches are compositionally biased toward basic and acidic residues: residues 53–73 and 82–96; these read VPEHGGDSDSEDRDRQPAGRE and EDYKLDREEREDIHQ. 2 stretches are compositionally biased toward acidic residues: residues 144-156 and 167-176; these read ERGDDDEEEEEDE and ELEEEEDEEE. Positions 190–202 are enriched in basic and acidic residues; sequence DLKDESSVSRDLD. 2 stretches are compositionally biased toward acidic residues: residues 203 to 214 and 233 to 245; these read EHELDYDEEVPE and EDGEDEEEEDEEE. Over residues 261–289 the composition is skewed to basic and acidic residues; it reads DNRDTPLRKSEDSREGGRRDSFRDKKKEE. Acidic residues predominate over residues 290-306; that stretch reads DDGEIDEGEIDDDDLEE. Positions 388–397 are enriched in gly residues; that stretch reads PPGGAAGGGP. Residues 530-615 are compositionally biased toward basic and acidic residues; that stretch reads PDRERERDPR…EKKDEKEKTL (86 aa). A coiled-coil region spans residues 543-584; the sequence is RERERERERDHRERERRQREREREREREREKDSRRRKDEWDR. A compositionally biased stretch (pro residues) spans 622-631; sequence NMPPRGPMEP. Residues 632–646 show a composition bias toward basic and acidic residues; sequence PTKKDMLSVTKRPDE. Ser-666 is subject to Phosphoserine. Residues 677 to 740 show a composition bias toward low complexity; the sequence is SGSSVSLSNS…SRSGSFSSSP (64 aa). Composition is skewed to pro residues over residues 783–800 and 807–817; these read KVMPSPSLPEQPGKPPKP and PPNPRPPGRPP. Residues 818-833 show a composition bias toward basic and acidic residues; the sequence is GPREPREPPNMREGRK. Low complexity-rich tracts occupy residues 847-875, 882-903, and 914-925; these read VSGSVSGSSYSGSSSRSRSRSSSASASRS, SLSVSSVSSVSSASSSSSSVRS, and ASPVSSASSRSP. Basic and acidic residues-rich tracts occupy residues 933–964 and 1012–1029; these read DRGPPRERGPNKERGKPPKKDEPFKDERKRVD and QTDRSNRKRYFPSDKERP. Ser-1056 bears the Phosphoserine mark. 2 stretches are compositionally biased toward low complexity: residues 1083–1098 and 1107–1119; these read PAKSSGKGPAAASAAK and GSASGSAPGKPSS. The stretch at 1118–1146 forms a coiled coil; it reads SSTLSRREELLKQLKAVEDAIARKRAKIP.

Its subcellular location is the nucleus. The chain is Zinc finger CCCH domain-containing protein 18 (zc3h18) from Danio rerio (Zebrafish).